A 161-amino-acid polypeptide reads, in one-letter code: DNA-directed RNA polymerase 18 kDa subunit (161 aa).

Belongs to the poxviridae DNA-directed RNA polymerase 18 kDa subunit family. The DNA-dependent RNA polymerase used for intermediate and late genes expression consists of eight subunits Rpo30/OPG66, Rpo7/OPG90, Rpo22/OPG103, Rpo147/OPG105, Rpo18/OPG119, Rpo19/OPG131, Rpo132/OPG151 and Rpo35/OPG156. The same holoenzyme, with the addition of the transcription-specificity factor OPG109, is used for early gene expression.

It localises to the virion. The enzyme catalyses RNA(n) + a ribonucleoside 5'-triphosphate = RNA(n+1) + diphosphate. In terms of biological role, part of the DNA-dependent RNA polymerase which catalyzes the transcription of viral DNA into RNA using the four ribonucleoside triphosphates as substrates. Responsible for the transcription of early, intermediate and late genes. DNA-dependent RNA polymerase associates with the early transcription factor (ETF), itself composed of OPG118 and OPG133, thereby allowing the early genes transcription. Late transcription, and probably also intermediate transcription, require newly synthesized RNA polymerase. The polypeptide is DNA-directed RNA polymerase 18 kDa subunit (OPG119) (Vaccinia virus (strain Ankara) (VACV)).